The following is a 973-amino-acid chain: Mediator of RNA polymerase II transcription subunit 16 (973 aa).

It belongs to the Mediator complex subunit 16 family. Component of the Mediator complex.

It localises to the nucleus. Its function is as follows. Component of the Mediator complex, a coactivator involved in the regulated transcription of nearly all RNA polymerase II-dependent genes. Mediator functions as a bridge to convey information from gene-specific regulatory proteins to the basal RNA polymerase II transcription machinery. Mediator is recruited to promoters by direct interactions with regulatory proteins and serves as a scaffold for the assembly of a functional preinitiation complex with RNA polymerase II and the general transcription factors. The protein is Mediator of RNA polymerase II transcription subunit 16 (SIN4) of Candida glabrata (strain ATCC 2001 / BCRC 20586 / JCM 3761 / NBRC 0622 / NRRL Y-65 / CBS 138) (Yeast).